The sequence spans 299 residues: HTH-type transcriptional regulator CrgA (299 aa).

Positions 1–60 (MKTNSEELTVFVQVVESGSFSRAAEQLAMANSAVSRIVKRLEEKLGVNLLNRTTRQLSLT) constitute an HTH lysR-type domain. A DNA-binding region (H-T-H motif) is located at residues 20–39 (FSRAAEQLAMANSAVSRIVK).

Belongs to the LysR transcriptional regulatory family. In terms of assembly, forms oligomers. Forms an octomeric ring-like structure in solution. May form hexadecamers when bound to target DNA.

Its activity is regulated as follows. Activation and repression activities are enhanced by the addition of alpha-methylene-gamma-butyrolactone (MBL), an inducer of NADPH:quinone oxidoreductase. Its function is as follows. Regulatory protein that activates transcription of mdaB, encoding a NADPH:quinone oxidoreductase, and represses its own transcription. Under the same experimental conditions, no regulation of transcription of pilus and capsule genes is detected. This Neisseria meningitidis serogroup B (strain ATCC BAA-335 / MC58) protein is HTH-type transcriptional regulator CrgA.